The sequence spans 174 residues: ATP-dependent protease subunit HslV (174 aa).

Threonine 2 is a catalytic residue. Na(+)-binding residues include glycine 159, aspartate 162, and threonine 165.

The protein belongs to the peptidase T1B family. HslV subfamily. In terms of assembly, a double ring-shaped homohexamer of HslV is capped on each side by a ring-shaped HslU homohexamer. The assembly of the HslU/HslV complex is dependent on binding of ATP.

It localises to the cytoplasm. It carries out the reaction ATP-dependent cleavage of peptide bonds with broad specificity.. Its activity is regulated as follows. Allosterically activated by HslU binding. Protease subunit of a proteasome-like degradation complex believed to be a general protein degrading machinery. The chain is ATP-dependent protease subunit HslV from Lacticaseibacillus casei (strain BL23) (Lactobacillus casei).